Reading from the N-terminus, the 344-residue chain is Putative F-box/kelch-repeat protein At1g19930 (344 aa).

Residues 8-54 enclose the F-box domain; it reads TELIFSLPNDLLVNILARVSRLDYPILSLVSKRFSSVLTLPELYQTR. 4 Kelch repeats span residues 122–168, 170–195, 196–241, and 243–276; these read NIYN…LLDG, IYVTGGCRLTFHGCGDQTDNVVVDGK, LHSC…YYYY, and NENIKWYDTKVRSWRTLNGLKTLPRFARYANVRL.

This is Putative F-box/kelch-repeat protein At1g19930 from Arabidopsis thaliana (Mouse-ear cress).